A 681-amino-acid polypeptide reads, in one-letter code: Cadmium, zinc and cobalt-transporting ATPase (681 aa).

One can recognise an HMA domain in the interval 1 to 66; sequence MQKYHFTGLD…LEPDMELSEQ (66 aa). Over 1–72 the chain is Cytoplasmic; it reads MQKYHFTGLD…LSEQVQSEAK (72 aa). 2 residues coordinate Cd(2+): cysteine 11 and cysteine 14. Co(2+) contacts are provided by cysteine 11 and cysteine 14. 2 residues coordinate Zn(2+): cysteine 11 and cysteine 14. A helical membrane pass occupies residues 73-92; that stretch reads PSAIPLLLSVVLYLIAVATI. Residues 93 to 102 are Extracellular-facing; that stretch reads HFSAQNWALH. A helical membrane pass occupies residues 103–124; sequence LSYALLAGVYLVAGKDVFLGAL. Topologically, residues 125-131 are cytoplasmic; the sequence is RAIRNKQ. Residues 132–151 form a helical membrane-spanning segment; it reads FFDENTLMLSATIAAFGVGA. At 152–154 the chain is on the extracellular side; it reads HEE. A helical transmembrane segment spans residues 155–174; it reads AVSIMVFYSAGEFLQQLAIA. Over 175–308 the chain is Cytoplasmic; sequence RSKQSLHALL…ITTFARYYTP (134 aa). Residues 309 to 327 form a helical membrane-spanning segment; the sequence is AVFAIALLIALVPPLLGHG. The Extracellular portion of the chain corresponds to 328-332; sequence DFDTW. The helical transmembrane segment at 333-350 threads the bilayer; the sequence is IYRGLFALMVSCPCALVI. Residues 351-630 lie on the Cytoplasmic side of the membrane; it reads SVPLGYFGGV…VFKIAKKTKR (280 aa). Aspartate 388 (4-aspartylphosphate intermediate) is an active-site residue. The Mg(2+) site is built by aspartate 578 and aspartate 582. A helical membrane pass occupies residues 631–652; it reads IIIENIIFALAIKAMFIVLGLS. At 653–660 the chain is on the extracellular side; that stretch reads GDASLWEA. Residues 661–676 traverse the membrane as a helical segment; it reads VLGDVGVTLIALANSM. Topologically, residues 677-681 are cytoplasmic; sequence RTMRI.

Belongs to the cation transport ATPase (P-type) (TC 3.A.3) family. Type IB subfamily.

The protein resides in the cell membrane. The catalysed reaction is Zn(2+)(in) + ATP + H2O = Zn(2+)(out) + ADP + phosphate + H(+). The enzyme catalyses Cd(2+)(in) + ATP + H2O = Cd(2+)(out) + ADP + phosphate + H(+). Its function is as follows. Couples the hydrolysis of ATP with the transport of cadmium, zinc and cobalt out of the cell. This chain is Cadmium, zinc and cobalt-transporting ATPase (cadA), found in Helicobacter felis.